Consider the following 368-residue polypeptide: Peptide chain release factor 2 (368 aa).

Gln250 bears the N5-methylglutamine mark.

This sequence belongs to the prokaryotic/mitochondrial release factor family. In terms of processing, methylated by PrmC. Methylation increases the termination efficiency of RF2.

Its subcellular location is the cytoplasm. Functionally, peptide chain release factor 2 directs the termination of translation in response to the peptide chain termination codons UGA and UAA. This chain is Peptide chain release factor 2, found in Rickettsia bellii (strain RML369-C).